Here is a 213-residue protein sequence, read N- to C-terminus: Flagellin A1 (213 aa).

A propeptide spanning residues 1–10 (MFENINEDRG) is cleaved from the precursor. N-linked (GlcNAc...) asparagine glycosylation is found at N70, N115, and N172.

The protein belongs to the archaeal flagellin family. In terms of processing, glycosylated by a pentasaccharide similar to the S-layer glycoprotein, probably comprising a hexose, 2 hexuronic acids, a methyl ester of a hexuronic acid and mannose. Glycosylation is required for biosynthesis of stable flagella.

The protein resides in the archaeal flagellum. Major flagellin required for motility. Not involved in PibD-dependent surface adhesion. Much more abundant in cells compared to FlgA2. This chain is Flagellin A1 (flgA1), found in Haloferax volcanii (strain ATCC 29605 / DSM 3757 / JCM 8879 / NBRC 14742 / NCIMB 2012 / VKM B-1768 / DS2) (Halobacterium volcanii).